A 485-amino-acid polypeptide reads, in one-letter code: dTDP-4-amino-4,6-dideoxy-D-glucose ammonia-lyase (485 aa).

[4Fe-4S] cluster contacts are provided by C141, C145, and C148.

This sequence belongs to the radical SAM superfamily. DesII family. As to quaternary structure, monomer. Requires [4Fe-4S] cluster as cofactor.

The catalysed reaction is dTDP-4-amino-4,6-dideoxy-alpha-D-glucose + AH2 + S-adenosyl-L-methionine = dTDP-3-dehydro-4,6-dideoxy-alpha-D-glucose + 5'-deoxyadenosine + L-methionine + A + NH4(+) + H(+). In terms of biological role, involved in the biosynthesis of dTDP-alpha-D-desosamine, a sugar found in several bacterial macrolide antibiotics. Catalyzes the SAM-dependent deamination of dTDP-4-amino-4,6-deoxyglucose (dTDP-viosamine) to yield dTDP-3-keto-4,6-deoxyglucose. It can also catalyze the oxidative dehydrogenation of the non-physiological substrate dTDP-D-quinovose to dTDP-3-keto-6-deoxy-d-glucose. It can also deaminate dTDP-3-amino-3,6-deoxyglucose. The protein is dTDP-4-amino-4,6-dideoxy-D-glucose ammonia-lyase of Streptomyces venezuelae.